Reading from the N-terminus, the 611-residue chain is Rho-related BTB domain-containing protein 3 (611 aa).

Residues 1–175 form a rho-like region; the sequence is MSIHIVALGN…KELGATYLEL (175 aa). BTB domains are found at residues 254-356 and 420-487; these read VDVV…QWEE and ADVV…CPAG. The interval 420-611 is interaction with Rab9; that stretch reads ADVVFEIQGT…HSRKCRCLVM (192 aa).

In terms of assembly, interacts with RAB9A and RAB9B (at lower level compared to RAB9A-binding). Interacts with M6PRBP1/TIP47. Ubiquitous. Highly expressed in neural and cardiac tissues, pancreas, placenta and testis.

Its subcellular location is the golgi apparatus. Functionally, rab9-regulated ATPase required for endosome to Golgi transport. Involved in transport vesicle docking at the Golgi complex, possibly by participating in release M6PRBP1/TIP47 from vesicles to permit their efficient docking and fusion at the Golgi. Specifically binds Rab9, but not other Rab proteins. Has low intrinsic ATPase activity due to autoinhibition, which is relieved by Rab9. The protein is Rho-related BTB domain-containing protein 3 (RHOBTB3) of Homo sapiens (Human).